Consider the following 456-residue polypeptide: Probable galactarate/D-glucarate transporter GudP (456 aa).

10 helical membrane passes run 11–31 (YLIL…RATI), 51–71 (YIFS…GWLL), 78–96 (KVYA…LQGY), 102–119 (ISTA…VGLA), 246–266 (IYLG…WFPV), 280–300 (GIIA…GGVI), 317–337 (TPIV…YVDA), 341–361 (VVCF…GWAV), 381–401 (FGNL…AATG), and 408–428 (SSWV…VGEI).

This sequence belongs to the major facilitator superfamily. Phthalate permease family.

It is found in the cell inner membrane. It carries out the reaction galactarate(in) + H(+)(in) = galactarate(out) + H(+)(out). It catalyses the reaction D-glucarate(in) + H(+)(in) = D-glucarate(out) + H(+)(out). In terms of biological role, probably involved in the uptake of galactarate and/or D-glucarate. The protein is Probable galactarate/D-glucarate transporter GudP (gudP) of Pseudomonas putida (Arthrobacter siderocapsulatus).